Consider the following 402-residue polypeptide: mRNA cap guanine-N(7) methyltransferase (402 aa).

Residues 1-11 (MDHVLNPEEKV) are compositionally biased toward basic and acidic residues. Residues 1–75 (MDHVLNPEEK…PRLEEGHGSL (75 aa)) are disordered. Polar residues predominate over residues 35–50 (PKLSASEKSLPGNTKS). Positions 55 to 72 (KAAEPDSPPKRPRLEEGH) are enriched in basic and acidic residues. An mRNA cap 0 methyltransferase domain is found at 94–401 (SRIFHLRNFN…IYLLFAFEKQ (308 aa)). 103–104 (NN) provides a ligand contact to mRNA. Positions 107, 131, 153, 187, 210, and 215 each coordinate S-adenosyl-L-methionine.

Belongs to the class I-like SAM-binding methyltransferase superfamily. mRNA cap 0 methyltransferase family.

Its subcellular location is the nucleus. The enzyme catalyses a 5'-end (5'-triphosphoguanosine)-ribonucleoside in mRNA + S-adenosyl-L-methionine = a 5'-end (N(7)-methyl 5'-triphosphoguanosine)-ribonucleoside in mRNA + S-adenosyl-L-homocysteine. Catalytic subunit of the mRNA-capping methyltransferase RNMT:RAMAC complex that methylates the N7 position of the added guanosine to the 5'-cap structure of mRNAs. Binds RNA containing 5'-terminal GpppC. The sequence is that of mRNA cap guanine-N(7) methyltransferase (rnmt) from Xenopus laevis (African clawed frog).